We begin with the raw amino-acid sequence, 73 residues long: Small ribosomal subunit protein bS18 (73 aa).

Belongs to the bacterial ribosomal protein bS18 family. As to quaternary structure, part of the 30S ribosomal subunit. Forms a tight heterodimer with protein bS6.

Functionally, binds as a heterodimer with protein bS6 to the central domain of the 16S rRNA, where it helps stabilize the platform of the 30S subunit. This is Small ribosomal subunit protein bS18 from Synechococcus sp. (strain RCC307).